A 389-amino-acid chain; its full sequence is Trans-2-enoyl-CoA reductase [NADH] (389 aa).

Residues 47–52 (GASTGY), 73–74 (FE), 110–111 (DA), and 138–139 (LA) each bind NAD(+). Tyr-224 lines the substrate pocket. Tyr-234 serves as the catalytic Proton donor. NAD(+)-binding positions include Lys-243 and 272-274 (LVT).

Belongs to the TER reductase family. Monomer.

It carries out the reaction a 2,3-saturated acyl-CoA + NAD(+) = a (2E)-enoyl-CoA + NADH + H(+). It participates in lipid metabolism; fatty acid biosynthesis. Its function is as follows. Involved in the fatty acid synthesis (FAS II). Catalyzes the reduction of a carbon-carbon double bond in an enoyl moiety that is covalently linked to a coenzyme A (CoA). This chain is Trans-2-enoyl-CoA reductase [NADH], found in Clostridium perfringens (strain 13 / Type A).